Consider the following 237-residue polypeptide: N-alpha-acetyltransferase 40 (237 aa).

A lipid anchor (N-myristoyl glycine) is attached at glycine 2. The 154-residue stretch at 63 to 216 folds into the N-acetyltransferase domain; that stretch reads TALSPDTVEW…EDCSYEILSR (154 aa). Residues tyrosine 85, 127 to 129, and tyrosine 138 contribute to the substrate site; that span reads DVE. Acetyl-CoA contacts are provided by residues 140 to 142 and 148 to 153; these read VQL and RKGLGK. Substrate is bound at residue threonine 174. Residue asparagine 179 participates in acetyl-CoA binding. Tyrosine 211 lines the substrate pocket.

It belongs to the acetyltransferase family. NAA40 subfamily.

The protein resides in the cytoplasm. Its subcellular location is the nucleus. It carries out the reaction N-terminal L-seryl-[histone H4] + acetyl-CoA = N-terminal N(alpha)-acetyl-L-seryl-[histone H4] + CoA + H(+). It catalyses the reaction N-terminal L-seryl-[histone H2A] + acetyl-CoA = N-terminal N(alpha)-acetyl-L-seryl-[histone H2A] + CoA + H(+). N-alpha-acetyltransferase that specifically mediates the acetylation of the N-terminal residues of histones H4 and H2A. In contrast to other N-alpha-acetyltransferase, has a very specific selectivity for histones H4 and H2A N-terminus and specifically recognizes the 'Ser-Gly-Arg-Gly sequence'. The polypeptide is N-alpha-acetyltransferase 40 (naa40) (Danio rerio (Zebrafish)).